The primary structure comprises 608 residues: Kelch-like protein 10 (608 aa).

Residues 39–106 (CDVVIKVNGF…AYTRTVPITP (68 aa)) form the BTB domain. Kelch repeat units follow at residues 292-339 (ILFA…YLKG), 340-386 (YVYI…VLGN), 388-433 (IYAM…TLYG), 434-480 (KVYI…AYGE), 481-527 (HVYA…VVDD), and 529-574 (LFVV…VVPG). S501 bears the Phosphoserine mark.

Self-associates. Interacts with CUL3; indicative for the participation in an E3 ubiquitin ligase complex.

Its subcellular location is the cytoplasm. The protein operates within protein modification; protein ubiquitination. In terms of biological role, may be a substrate-specific adapter of a CUL3-based E3 ubiquitin-protein ligase complex which mediates the ubiquitination and subsequent proteasomal degradation of target proteins during spermatogenesis. The polypeptide is Kelch-like protein 10 (KLHL10) (Homo sapiens (Human)).